Here is a 162-residue protein sequence, read N- to C-terminus: MNPVRKKRLIIVLAIVAGVGAAVGLALSALQQNINLFYTPTQIANGEAPTDTRIRAGGLVEKGSLQRSEDSLNVRFVVTDGAKEVTIAYHGILPDLFREGQGIVALGKLGGDGVLVADEVLAKHDENYMPPEVTKALKDSGQLKHYENGKAAGETSYNQEGK.

Topologically, residues 1–8 are cytoplasmic; the sequence is MNPVRKKR. A helical; Signal-anchor for type II membrane protein membrane pass occupies residues 9–29; that stretch reads LIIVLAIVAGVGAAVGLALSA. Over 30–162 the chain is Periplasmic; sequence LQQNINLFYT…GETSYNQEGK (133 aa). The heme site is built by histidine 124 and tyrosine 128. Residues 139-148 show a composition bias toward basic and acidic residues; the sequence is DSGQLKHYEN. The interval 139–162 is disordered; that stretch reads DSGQLKHYENGKAAGETSYNQEGK.

This sequence belongs to the CcmE/CycJ family.

It is found in the cell inner membrane. In terms of biological role, heme chaperone required for the biogenesis of c-type cytochromes. Transiently binds heme delivered by CcmC and transfers the heme to apo-cytochromes in a process facilitated by CcmF and CcmH. This Pseudomonas aeruginosa (strain ATCC 15692 / DSM 22644 / CIP 104116 / JCM 14847 / LMG 12228 / 1C / PRS 101 / PAO1) protein is Cytochrome c-type biogenesis protein CcmE.